Here is a 120-residue protein sequence, read N- to C-terminus: GATA transcription factor 23 (120 aa).

Residues 22–76 form a GATA-type zinc finger; sequence KGTIRCCSECKTTKTPMWRGGPTGPKSLCNACGIRHRKQRRSELLGIHIIRSHKS.

Belongs to the type IV zinc-finger family. Class B subfamily.

It is found in the nucleus. Transcriptional regulator that specifically binds 5'-GATA-3' or 5'-GAT-3' motifs within gene promoters. In Arabidopsis thaliana (Mouse-ear cress), this protein is GATA transcription factor 23 (GATA23).